Here is a 447-residue protein sequence, read N- to C-terminus: UDP-glucosyl transferase 79T1 (447 aa).

Residue His18 is the Proton acceptor of the active site. Asp116 functions as the Charge relay in the catalytic mechanism. The UDP site is built by Ser265, Trp323, Val324, His341, Thr346, and Glu349.

The protein belongs to the UDP-glycosyltransferase family. Mainly expressed in flowers, flower buds and young leaves, and, to a lesser extent, in old leaves, stems and roots.

It participates in secondary metabolite biosynthesis; terpenoid biosynthesis. Its function is as follows. Component of the oleanane-type triterpene saponins (e.g. saponarioside A and saponarioside B) biosynthetic pathway, leading to the production of natural products with detergent properties used as traditional sources of soap. A glycosyltransferase that mediates the conversion of QA-triF to QA-triFR via the elongation of the C-28 sugar chain with a deoxyhexose on the D-fucose moiety. The sequence is that of UDP-glucosyl transferase 79T1 from Saponaria officinalis (Common soapwort).